Consider the following 152-residue polypeptide: Protein CHLOROPLAST VESICULATION (152 aa).

The N-terminal 22 residues, Met1–Leu22, are a transit peptide targeting the chloroplast. Residues Cys48 to Ile65 traverse the membrane as a helical segment. Residues Arg92 to Val152 form an important for chloroplast destabilization and the formation of CV-containing vesicles region.

In terms of assembly, interacts with the photosystem II subunit PsbO1 via its C-terminal region in the chloroplast thylakoid membrane and in CV-containing vesicles (CCVs). As to expression, mostly expressed in senescent and mature leaves but not in young leaves.

It localises to the plastid. It is found in the chloroplast membrane. Its subcellular location is the chloroplast thylakoid membrane. The protein localises to the chloroplast envelope. The protein resides in the vacuole. It localises to the vesicle. Triggers stress-induced chloroplast degradation, independently of autophagy and senescence-associated vacuoles. After targeting to the chloroplast, triggers its destabilization and subsequent disassembly, inducing the formation of CV-containing vesicles (CCVs) carrying stromal proteins, envelope membrane proteins, and thylakoid membrane proteins which are released from the chloroplasts and mobilized to the vacuole for proteolysis. The polypeptide is Protein CHLOROPLAST VESICULATION (Arabidopsis thaliana (Mouse-ear cress)).